Reading from the N-terminus, the 97-residue chain is Cell division topological specificity factor (97 aa).

This sequence belongs to the MinE family.

Functionally, prevents the cell division inhibition by proteins MinC and MinD at internal division sites while permitting inhibition at polar sites. This ensures cell division at the proper site by restricting the formation of a division septum at the midpoint of the long axis of the cell. This is Cell division topological specificity factor from Rhodospirillum centenum (strain ATCC 51521 / SW).